The primary structure comprises 940 residues: UvrABC system protein A (940 aa).

31–38 (GLSGSGKS) contributes to the ATP binding site. The segment at 253 to 280 (CPICGYSMRELEPRLFSFNNPAGACPTC) adopts a C4-type zinc-finger fold. 2 ABC transporter domains span residues 310–587 (WDRR…PESL) and 607–937 (ANPE…RFLK). ATP is bound at residue 640–647 (GVSGSGKS). Residues 740-766 (CEACQGDGVIKVEMHFLPDIYVPCDQC) form a C4-type zinc finger.

It belongs to the ABC transporter superfamily. UvrA family. Forms a heterotetramer with UvrB during the search for lesions.

The protein resides in the cytoplasm. Its function is as follows. The UvrABC repair system catalyzes the recognition and processing of DNA lesions. UvrA is an ATPase and a DNA-binding protein. A damage recognition complex composed of 2 UvrA and 2 UvrB subunits scans DNA for abnormalities. When the presence of a lesion has been verified by UvrB, the UvrA molecules dissociate. Functionally, plays a role in recovery after DNA ADP-ribosylation. In Escherichia coli O127:H6 (strain E2348/69 / EPEC), this protein is UvrABC system protein A.